The following is a 124-amino-acid chain: MSYIPGQPVTAVVQRVEIHKLRQGENLILGFSIGGGIDQDPSQNPFSEDKTDKGIYVTRVSEGGPAEIAGLQIGDKIMQVNGWDMTMVTHDQARKRLTKRSEEVVRLLVTRQSLQKAVQQSMLS.

Serine 2 carries the N-acetylserine modification. Residues 15–112 enclose the PDZ domain; it reads RVEIHKLRQG…EVVRLLVTRQ (98 aa). Position 61 is a phosphoserine (serine 61).

In terms of assembly, interacts (via its PDZ domain) with GLS2. Interacts (via its PDZ domain) with RTKN (via the C-terminal region); this interaction facilitates Rho-mediated activation of the FOS serum response element (SRE). Interacts (via its PDZ domain) with CTNNB1; this interaction inhibits the transcriptional activity of CTNNB1. Interacts with HTLV-1 TAX protein. Interacts (via PDZ domain) with ARHGEF16. Interacts (via PDZ domain) with KCNJ4 (via C-terminus). Competes with LIN7A for KCNJ4 binding. Interacts with ADGRB2. In terms of tissue distribution, ubiquitous. Detected in brain, heart, kidney, lung, small intestine and skeletal muscle. Detected in various cell lines including HeLa. Weakly expressed in peripheral blood leukocytes.

The protein resides in the cytoplasm. It localises to the nucleus. It is found in the cell membrane. In terms of biological role, may regulate a number of protein-protein interactions by competing for PDZ domain binding sites. Binds CTNNB1 and may thereby act as an inhibitor of the Wnt signaling pathway. Competes with LIN7A for KCNJ4 binding, and thereby promotes KCNJ4 internalization. May play a role in the Rho signaling pathway. May play a role in activation of CDC42 by the viral protein HPV16 E6. This Homo sapiens (Human) protein is Tax1-binding protein 3.